Reading from the N-terminus, the 166-residue chain is NAD(P)H-quinone oxidoreductase subunit I, chloroplastic (166 aa).

4Fe-4S ferredoxin-type domains are found at residues glycine 55–lysine 84 and leucine 95–glutamate 124. Residues cysteine 64, cysteine 67, cysteine 70, cysteine 74, cysteine 104, cysteine 107, cysteine 110, and cysteine 114 each coordinate [4Fe-4S] cluster.

This sequence belongs to the complex I 23 kDa subunit family. In terms of assembly, NDH is composed of at least 16 different subunits, 5 of which are encoded in the nucleus. [4Fe-4S] cluster is required as a cofactor.

It is found in the plastid. The protein localises to the chloroplast thylakoid membrane. It carries out the reaction a plastoquinone + NADH + (n+1) H(+)(in) = a plastoquinol + NAD(+) + n H(+)(out). The enzyme catalyses a plastoquinone + NADPH + (n+1) H(+)(in) = a plastoquinol + NADP(+) + n H(+)(out). Its function is as follows. NDH shuttles electrons from NAD(P)H:plastoquinone, via FMN and iron-sulfur (Fe-S) centers, to quinones in the photosynthetic chain and possibly in a chloroplast respiratory chain. The immediate electron acceptor for the enzyme in this species is believed to be plastoquinone. Couples the redox reaction to proton translocation, and thus conserves the redox energy in a proton gradient. This chain is NAD(P)H-quinone oxidoreductase subunit I, chloroplastic, found in Enydra sessilis (Smallray swampwort).